Reading from the N-terminus, the 120-residue chain is Large ribosomal subunit protein bL20 (120 aa).

This sequence belongs to the bacterial ribosomal protein bL20 family.

Its function is as follows. Binds directly to 23S ribosomal RNA and is necessary for the in vitro assembly process of the 50S ribosomal subunit. It is not involved in the protein synthesizing functions of that subunit. This chain is Large ribosomal subunit protein bL20, found in Ureaplasma urealyticum serovar 10 (strain ATCC 33699 / Western).